A 451-amino-acid chain; its full sequence is MSALVLESRALGRKLSDFGQETSYIEGNSDQNAVSLIFSLKEEVGALARVLRLFEENDINLTHIESRPSRLRKDEYEFFTNLDQRSVPALANIIKILRHDIGATVHELSRDKKKDTVPWFPRTIQELDNFANQVLSYGAELDADHPGFKDPVYRARRKQFADIAYNYRHGQPIPRVEYTEEEKKTWGTVFRTLKSLYKTHACYEHNHIFPLLEKYCGFREDNIPQLEEVSQFLQSCTGFRLRPVAGLLSSRDFLGGLAFRVFHCTQYIRHGSKPMYTPEPDICHELLGHVPLFSDRSFAQFSQEIGLASLGAPDEYIEKLATIYWFTVEFGLCKQGDSIKAYGAGLLSSFGELQYCLSDKPKLLPLELEKTAVQEYTITEFQPLYYVAESFNDAKEKVRNFAATIPRPFSVHYDPYTQRIEVLDNTQQLKILADSISSEVEILCSALQKLK.

Residue Ser-16 is modified to Phosphoserine; by PKA. Residues 35–113 (SLIFSLKEEV…TVHELSRDKK (79 aa)) enclose the ACT domain. Residues His-284, His-289, and Glu-329 each coordinate Fe cation.

It belongs to the biopterin-dependent aromatic amino acid hydroxylase family. In terms of assembly, homodimer and homotetramer. Fe(2+) is required as a cofactor. Phosphorylation at Ser-16 increases basal activity and facilitates activation by the substrate phenylalanine.

The catalysed reaction is (6R)-L-erythro-5,6,7,8-tetrahydrobiopterin + L-phenylalanine + O2 = (4aS,6R)-4a-hydroxy-L-erythro-5,6,7,8-tetrahydrobiopterin + L-tyrosine. It functions in the pathway amino-acid degradation; L-phenylalanine degradation; acetoacetate and fumarate from L-phenylalanine: step 1/6. With respect to regulation, N-terminal region of PAH is thought to contain allosteric binding sites for phenylalanine and to constitute an 'inhibitory' domain that regulates the activity of a catalytic domain in the C-terminal portion of the molecule. In terms of biological role, catalyzes the hydroxylation of L-phenylalanine to L-tyrosine. The polypeptide is Phenylalanine-4-hydroxylase (PAH) (Bos taurus (Bovine)).